The sequence spans 412 residues: uncharacterized protein (412 aa).

His-49 is a Zn(2+) binding site. The active-site Proton acceptor is the Glu-52. Residues His-53 and Glu-129 each coordinate Zn(2+).

The protein belongs to the peptidase M16 family. Requires Zn(2+) as cofactor.

This is an uncharacterized protein from Rickettsia felis (strain ATCC VR-1525 / URRWXCal2) (Rickettsia azadi).